We begin with the raw amino-acid sequence, 371 residues long: uncharacterized protein (371 aa).

A helical transmembrane segment spans residues 17 to 33 (FLLFSVVLIIVMTTLVF).

It to S.pombe SpBC4C3.08 and SpBC4C3.09.

The protein resides in the membrane. This is an uncharacterized protein from Schizosaccharomyces pombe (strain 972 / ATCC 24843) (Fission yeast).